Here is a 77-residue protein sequence, read N- to C-terminus: Immune protein Tsi2 (77 aa).

Forms a heterotetramer with Tse2 consisting of two Tse2 dimers and two Tsi2 dimers. Formation of the complex inactivates Tse2 enzymatic activity.

Immunity protein that plays a role in preventing early activation of toxin Tse2. Binds to a large surface of Tse2 and thereby occludes the active site to specifically inhibits Tse2. In Pseudomonas aeruginosa (strain ATCC 15692 / DSM 22644 / CIP 104116 / JCM 14847 / LMG 12228 / 1C / PRS 101 / PAO1), this protein is Immune protein Tsi2.